The sequence spans 194 residues: Adenylate kinase (194 aa).

An ATP-binding site is contributed by 10-15 (GAGKGT). Positions 30 to 59 (STGDMLRAAVAAGTPVGLKAKAVMESGGLV) are NMP. Residues threonine 31, arginine 36, 57-59 (GLV), 85-88 (GFPR), and glutamine 92 each bind AMP. The LID stretch occupies residues 126-142 (NRAAEAKAKGEPVRKDD). Arginine 127 is an ATP binding site. AMP is bound by residues arginine 139 and arginine 150. Alanine 178 serves as a coordination point for ATP.

It belongs to the adenylate kinase family. In terms of assembly, monomer.

It is found in the cytoplasm. The enzyme catalyses AMP + ATP = 2 ADP. It participates in purine metabolism; AMP biosynthesis via salvage pathway; AMP from ADP: step 1/1. In terms of biological role, catalyzes the reversible transfer of the terminal phosphate group between ATP and AMP. Plays an important role in cellular energy homeostasis and in adenine nucleotide metabolism. This chain is Adenylate kinase, found in Azorhizobium caulinodans (strain ATCC 43989 / DSM 5975 / JCM 20966 / LMG 6465 / NBRC 14845 / NCIMB 13405 / ORS 571).